The chain runs to 147 residues: Prefoldin subunit alpha (147 aa).

Belongs to the prefoldin alpha subunit family. As to quaternary structure, heterohexamer of two alpha and four beta subunits.

The protein resides in the cytoplasm. Functionally, molecular chaperone capable of stabilizing a range of proteins. Seems to fulfill an ATP-independent, HSP70-like function in archaeal de novo protein folding. The polypeptide is Prefoldin subunit alpha (Thermococcus onnurineus (strain NA1)).